The chain runs to 691 residues: Protein vreteno (691 aa).

The tract at residues 128–155 (QKEREITSDPVTSTEPMPTPGPAISATE) is disordered. Tudor domains follow at residues 366-427 (KLQS…LAGL) and 573-630 (APPI…FIFP).

In terms of assembly, interacts with aub and piwi. In terms of tissue distribution, gonad-specific.

It is found in the cytoplasm. Its subcellular location is the cytoplasmic ribonucleoprotein granule. Gonad-specific protein essential for germline development to repress transposable elements and preventing their mobilization, which is essential for the germline integrity. Acts via the piRNA metabolic process in both germline and somatic gonadal tissues by mediating the repression of transposable elements during meiosis. Required for primary piRNA biogenesis in both germline and somatic gonadal tissues. The polypeptide is Protein vreteno (vret) (Drosophila melanogaster (Fruit fly)).